A 333-amino-acid chain; its full sequence is Tetraacyldisaccharide 4'-kinase (333 aa).

60–67 (TVGGTGKT) contacts ATP.

The protein belongs to the LpxK family.

It catalyses the reaction a lipid A disaccharide + ATP = a lipid IVA + ADP + H(+). Its pathway is glycolipid biosynthesis; lipid IV(A) biosynthesis; lipid IV(A) from (3R)-3-hydroxytetradecanoyl-[acyl-carrier-protein] and UDP-N-acetyl-alpha-D-glucosamine: step 6/6. In terms of biological role, transfers the gamma-phosphate of ATP to the 4'-position of a tetraacyldisaccharide 1-phosphate intermediate (termed DS-1-P) to form tetraacyldisaccharide 1,4'-bis-phosphate (lipid IVA). In Pseudomonas putida (strain GB-1), this protein is Tetraacyldisaccharide 4'-kinase.